The primary structure comprises 500 residues: NADH-quinone oxidoreductase subunit N (500 aa).

14 consecutive transmembrane segments (helical) span residues 13–33 (VMMP…IDLF), 42–62 (LLGL…LSLW), 79–99 (FAKS…LLSI), 111–131 (GEFY…ASSG), 133–153 (LITL…LVAI), 168–188 (VITG…IFGF), 211–231 (YVLS…LASA), 245–265 (TTPV…VIVL), 281–301 (ASML…TMII), 321–341 (VAHA…MFEA), 342–362 (IWFY…ILQV), 386–406 (AIAM…AGFI), 424–444 (VLAS…FGIF), and 461–481 (PPGV…LGVF).

The protein belongs to the complex I subunit 2 family. In terms of assembly, NDH-1 is composed of 14 different subunits. Subunits NuoA, H, J, K, L, M, N constitute the membrane sector of the complex.

It is found in the cell membrane. The enzyme catalyses a quinone + NADH + 5 H(+)(in) = a quinol + NAD(+) + 4 H(+)(out). NDH-1 shuttles electrons from NADH, via FMN and iron-sulfur (Fe-S) centers, to quinones in the respiratory chain. The immediate electron acceptor for the enzyme in this species is believed to be a menaquinone. Couples the redox reaction to proton translocation (for every two electrons transferred, four hydrogen ions are translocated across the cytoplasmic membrane), and thus conserves the redox energy in a proton gradient. The protein is NADH-quinone oxidoreductase subunit N of Anoxybacillus flavithermus (strain DSM 21510 / WK1).